A 347-amino-acid polypeptide reads, in one-letter code: Phenylalanine--tRNA ligase alpha subunit (347 aa).

Glu265 is a binding site for Mg(2+).

This sequence belongs to the class-II aminoacyl-tRNA synthetase family. Phe-tRNA synthetase alpha subunit type 1 subfamily. As to quaternary structure, tetramer of two alpha and two beta subunits. It depends on Mg(2+) as a cofactor.

The protein localises to the cytoplasm. It catalyses the reaction tRNA(Phe) + L-phenylalanine + ATP = L-phenylalanyl-tRNA(Phe) + AMP + diphosphate + H(+). This Wolbachia pipientis subsp. Culex pipiens (strain wPip) protein is Phenylalanine--tRNA ligase alpha subunit.